The sequence spans 203 residues: FMN-dependent NADH:quinone oxidoreductase (203 aa).

FMN contacts are provided by residues Ser-9, 15–17 (SVS), and 138–141 (SRGG).

This sequence belongs to the azoreductase type 1 family. Homodimer. FMN serves as cofactor.

It carries out the reaction 2 a quinone + NADH + H(+) = 2 a 1,4-benzosemiquinone + NAD(+). The enzyme catalyses N,N-dimethyl-1,4-phenylenediamine + anthranilate + 2 NAD(+) = 2-(4-dimethylaminophenyl)diazenylbenzoate + 2 NADH + 2 H(+). Functionally, quinone reductase that provides resistance to thiol-specific stress caused by electrophilic quinones. Its function is as follows. Also exhibits azoreductase activity. Catalyzes the reductive cleavage of the azo bond in aromatic azo compounds to the corresponding amines. This Methylorubrum extorquens (strain PA1) (Methylobacterium extorquens) protein is FMN-dependent NADH:quinone oxidoreductase.